The chain runs to 464 residues: Divalent metal cation transporter MntH (464 aa).

The next 11 helical transmembrane spans lie at 57-77 (ILIA…AGGA), 82-102 (SLLS…SMAA), 125-145 (GIIL…AEII), 157-177 (IPLV…LLLM), 186-206 (AIVA…VFLA), 229-249 (MLYL…LYLG), 281-301 (LTIA…LFFG), 321-341 (IVGA…LLSS), 376-396 (LLSV…EAKI), 399-419 (LLTL…VPLV), and 443-463 (VATV…VGVI).

The protein belongs to the NRAMP family.

It localises to the cell membrane. Its function is as follows. H(+)-stimulated, divalent metal cation uptake system. The protein is Divalent metal cation transporter MntH of Levilactobacillus brevis (Lactobacillus brevis).